A 122-amino-acid chain; its full sequence is MRHYEIVFIVHPDQSEQVPAMIERYKSTVTSQGGQVHRVEDWGRRQLAYMIQKLAKAHYVCLNIECGKETLAELEHAFKFNDAVLRHLIVQTKKAETAPSPMMKEVAREEAKKAAAQTEQAA.

A disordered region spans residues 99-122 (PSPMMKEVAREEAKKAAAQTEQAA).

Belongs to the bacterial ribosomal protein bS6 family.

Its function is as follows. Binds together with bS18 to 16S ribosomal RNA. The polypeptide is Small ribosomal subunit protein bS6 (Ralstonia pickettii (strain 12J)).